The sequence spans 405 residues: tRNA-specific 2-thiouridylase MnmA (405 aa).

ATP is bound by residues 41–48 and L67; that span reads AMSGGVDS. Residue C135 is the Nucleophile of the active site. Residues C135 and C231 are joined by a disulfide bond. An ATP-binding site is contributed by G159. Positions 181–183 are interaction with tRNA; sequence KDQ. The active-site Cysteine persulfide intermediate is the C231.

It belongs to the MnmA/TRMU family.

It localises to the cytoplasm. The enzyme catalyses S-sulfanyl-L-cysteinyl-[protein] + uridine(34) in tRNA + AH2 + ATP = 2-thiouridine(34) in tRNA + L-cysteinyl-[protein] + A + AMP + diphosphate + H(+). Its function is as follows. Catalyzes the 2-thiolation of uridine at the wobble position (U34) of tRNA, leading to the formation of s(2)U34. This Maricaulis maris (strain MCS10) (Caulobacter maris) protein is tRNA-specific 2-thiouridylase MnmA.